The sequence spans 76 residues: cAMP-dependent protein kinase inhibitor alpha (76 aa).

N-acetylthreonine is present on threonine 2. Positions lysine 49–serine 76 are disordered.

This sequence belongs to the PKI family. As to expression, present at high levels in skeletal muscle and brain but is present at lower levels in heart, testis and liver.

Extremely potent competitive inhibitor of cAMP-dependent protein kinase activity, this protein interacts with the catalytic subunit of the enzyme after the cAMP-induced dissociation of its regulatory chains. This is cAMP-dependent protein kinase inhibitor alpha (Pkia) from Mus musculus (Mouse).